An 848-amino-acid polypeptide reads, in one-letter code: Trimethylamine-N-oxide reductase 1 (848 aa).

The segment at residues 1–39 (MNNNDLFQASRRRFLAQLGGLTVAGMLGPSLLTSRRATA) is a signal peptide (tat-type signal). Mo-bis(molybdopterin guanine dinucleotide) is bound at residue Ser191.

Belongs to the prokaryotic molybdopterin-containing oxidoreductase family. As to quaternary structure, interacts with the N-terminal domain of TorC. The cofactor is Mo-bis(molybdopterin guanine dinucleotide). Post-translationally, predicted to be exported by the Tat system. The position of the signal peptide cleavage has not been experimentally proven.

It localises to the periplasm. It carries out the reaction trimethylamine + 2 Fe(III)-[cytochrome c] + H2O = trimethylamine N-oxide + 2 Fe(II)-[cytochrome c] + 3 H(+). Its function is as follows. Reduces trimethylamine-N-oxide (TMAO) into trimethylamine; an anaerobic reaction coupled to energy-yielding reactions. The sequence is that of Trimethylamine-N-oxide reductase 1 (torA) from Escherichia coli O157:H7.